Consider the following 214-residue polypeptide: MTTLADLRINYSRASLDEADVAHDPFAQFDRWFKEALAAKLPEPNTMTLATVGDDGRPSARIVLIKGVDERGFVFFTNYESRKGRDLAAHPQAALLFYWIELERQVRIEGRIEKTSAEESDRYFASRPLGSRIGAWASEQSAVIDSRATLEAQEQAVSERYGDNPPRPPHWGGYRLVPDSIEFWQGRPSRLHDRLLYTRDADTSPSWSISRLSP.

Substrate contacts are provided by residues 8–11 (RINY) and Lys-66. FMN contacts are provided by residues 61–66 (RIVLIK), 76–77 (FT), Arg-82, Lys-83, and Gln-105. Residues Tyr-123, Arg-127, and Ser-131 each contribute to the substrate site. FMN contacts are provided by residues 140–141 (QS) and Trp-184. Residue 190–192 (RLH) coordinates substrate. Residue Arg-194 participates in FMN binding.

Belongs to the pyridoxamine 5'-phosphate oxidase family. Homodimer. FMN serves as cofactor.

The enzyme catalyses pyridoxamine 5'-phosphate + O2 + H2O = pyridoxal 5'-phosphate + H2O2 + NH4(+). It carries out the reaction pyridoxine 5'-phosphate + O2 = pyridoxal 5'-phosphate + H2O2. It functions in the pathway cofactor metabolism; pyridoxal 5'-phosphate salvage; pyridoxal 5'-phosphate from pyridoxamine 5'-phosphate: step 1/1. Its pathway is cofactor metabolism; pyridoxal 5'-phosphate salvage; pyridoxal 5'-phosphate from pyridoxine 5'-phosphate: step 1/1. Catalyzes the oxidation of either pyridoxine 5'-phosphate (PNP) or pyridoxamine 5'-phosphate (PMP) into pyridoxal 5'-phosphate (PLP). The chain is Pyridoxine/pyridoxamine 5'-phosphate oxidase from Burkholderia lata (strain ATCC 17760 / DSM 23089 / LMG 22485 / NCIMB 9086 / R18194 / 383).